The following is a 151-amino-acid chain: Ribosome maturation factor RimP (151 aa).

It belongs to the RimP family.

It is found in the cytoplasm. In terms of biological role, required for maturation of 30S ribosomal subunits. The polypeptide is Ribosome maturation factor RimP (Thermoanaerobacter sp. (strain X514)).